Consider the following 545-residue polypeptide: Glucose-6-phosphate isomerase (545 aa).

Residue glutamate 351 is the Proton donor of the active site. Residues histidine 382 and lysine 510 contribute to the active site.

The protein belongs to the GPI family.

It localises to the cytoplasm. The enzyme catalyses alpha-D-glucose 6-phosphate = beta-D-fructose 6-phosphate. The protein operates within carbohydrate biosynthesis; gluconeogenesis. Its pathway is carbohydrate degradation; glycolysis; D-glyceraldehyde 3-phosphate and glycerone phosphate from D-glucose: step 2/4. Functionally, catalyzes the reversible isomerization of glucose-6-phosphate to fructose-6-phosphate. The chain is Glucose-6-phosphate isomerase from Helicobacter pylori (strain ATCC 700392 / 26695) (Campylobacter pylori).